The primary structure comprises 91 residues: Putative ribonuclease inhibitor YrdF (91 aa).

This sequence belongs to the barstar family.

Its subcellular location is the cytoplasm. The polypeptide is Putative ribonuclease inhibitor YrdF (yrdF) (Bacillus subtilis (strain 168)).